We begin with the raw amino-acid sequence, 221 residues long: DNA replication complex GINS protein SLD5 (221 aa).

The protein belongs to the GINS4/SLD5 family. In terms of assembly, component of the GINS complex which is a heterotetramer of gins1/psf1, gins2/psf2, gins3/psf3 and gins4/sld5. Component of the CMG helicase complex, composed of the mcm2-7 complex, the GINS complex and cdc45.

Its subcellular location is the nucleus. The protein resides in the chromosome. The protein localises to the cytoplasm. Functionally, required for initiation of chromosomal DNA replication. Core component of CDC45-MCM-GINS (CMG) helicase, the molecular machine that unwinds template DNA during replication, and around which the replisome is built. This is DNA replication complex GINS protein SLD5 from Xenopus laevis (African clawed frog).